Consider the following 152-residue polypeptide: Protein Smg homolog (152 aa).

This sequence belongs to the Smg family.

The chain is Protein Smg homolog from Bordetella bronchiseptica (strain ATCC BAA-588 / NCTC 13252 / RB50) (Alcaligenes bronchisepticus).